The following is a 638-amino-acid chain: Probable potassium transport system protein Kup (638 aa).

The interval 1-20 (MQVEHEVATEGGQAPASSGH) is disordered. 12 helical membrane passes run 24–44 (IAGLAVAAIGVVYGDIGTSPL), 67–87 (ILSLVFWALVTVVSAKYVVFI), 115–135 (AWWLSVLGVFGAALFYGDGMI), 153–173 (PAFKPFVIPIALVVLVGLFVM), 181–201 (VGAIFGPVMVCWFLVLAVLGI), 228–248 (LIGWLALGAVVLAITGGEALY), 263–283 (WFSLVFPALYLNYLGQGALIL), 301–321 (LVYPMVGMATLATIIASQAVI), 353–373 (IYVPGVNWMLLGAVVALVVGF), 382–402 (AYGIAVTLTMMIDTVLAFVVV), 413–433 (AVLFLVVFLAVDIAFFSATTV), and 435–455 (IFAGGWFPLLIGAAIFTLLRT).

Belongs to the HAK/KUP transporter (TC 2.A.72) family.

The protein resides in the cell inner membrane. It carries out the reaction K(+)(in) + H(+)(in) = K(+)(out) + H(+)(out). In terms of biological role, transport of potassium into the cell. Likely operates as a K(+):H(+) symporter. The protein is Probable potassium transport system protein Kup of Azoarcus sp. (strain BH72).